We begin with the raw amino-acid sequence, 451 residues long: Chromosomal replication initiator protein DnaA (451 aa).

The tract at residues 1–77 is domain I, interacts with DnaA modulators; it reads MTENEQIFWN…EVYNAQISVD (77 aa). The interval 77–110 is domain II; sequence DYVFEEDLMIEQNQTKINQKPKQQALNSLPTVTS. Positions 111-329 are domain III, AAA+ region; the sequence is DLNPKYSFEN…GALKDISLVA (219 aa). ATP is bound by residues G155, G157, K158, and T159. A domain IV, binds dsDNA region spans residues 330–451; the sequence is NFKQIDTITV…EIETIKNKIK (122 aa).

The protein belongs to the DnaA family. Oligomerizes as a right-handed, spiral filament on DNA at oriC.

It localises to the cytoplasm. Plays an essential role in the initiation and regulation of chromosomal replication. ATP-DnaA binds to the origin of replication (oriC) to initiate formation of the DNA replication initiation complex once per cell cycle. Binds the DnaA box (a 9 base pair repeat at the origin) and separates the double-stranded (ds)DNA. Forms a right-handed helical filament on oriC DNA; dsDNA binds to the exterior of the filament while single-stranded (ss)DNA is stabiized in the filament's interior. The ATP-DnaA-oriC complex binds and stabilizes one strand of the AT-rich DNA unwinding element (DUE), permitting loading of DNA polymerase. After initiation quickly degrades to an ADP-DnaA complex that is not apt for DNA replication. Binds acidic phospholipids. The sequence is that of Chromosomal replication initiator protein DnaA from Streptococcus pyogenes serotype M4 (strain MGAS10750).